Reading from the N-terminus, the 434-residue chain is Probable phosphoglucosamine mutase (434 aa).

The active-site Phosphoserine intermediate is the S91. Residues S91, D229, D231, and D233 each contribute to the Mg(2+) site. S91 is modified (phosphoserine).

This sequence belongs to the phosphohexose mutase family. Requires Mg(2+) as cofactor. In terms of processing, activated by phosphorylation.

It catalyses the reaction alpha-D-glucosamine 1-phosphate = D-glucosamine 6-phosphate. Catalyzes the conversion of glucosamine-6-phosphate to glucosamine-1-phosphate. The protein is Probable phosphoglucosamine mutase of Methanosarcina barkeri (strain Fusaro / DSM 804).